Reading from the N-terminus, the 334-residue chain is Putative heme-binding peroxidase (334 aa).

H40 serves as the catalytic Proton acceptor. H169 is a binding site for heme b. The active-site Tryptophan radical intermediate is the W185.

This sequence belongs to the peroxidase family. Cytochrome c peroxidase subfamily. Heme b is required as a cofactor.

Destroys radicals which are normally produced within the cells and which are toxic to biological systems. The polypeptide is Putative heme-binding peroxidase (Cryptococcus neoformans var. neoformans serotype D (strain JEC21 / ATCC MYA-565) (Filobasidiella neoformans)).